The following is a 189-amino-acid chain: Small heat shock protein 21 (189 aa).

A disordered region spans residues 26 to 53 (PPNFNPRKIAQGDNGKGQQVSRYGAGAG). Residues 77 to 183 (KYFVGFDDNV…HEKIVNIPIS (107 aa)) enclose the sHSP domain.

This sequence belongs to the small heat shock protein (HSP20) family.

Its function is as follows. Heat shock protein required for pathogenicity. Mediates thermotolerance and adaptation to oxidative stress and ethanol-induced stress. Required for invasive growth and filament formation under various filament inducing conditions. Plays a role in the capacity of damaging human-derived endothelial and oral epithelial cells during infection. Potentiates resistance to antifungal drugs, as well as resistance to killing by human neutrophils. Plays a major role in trehalose homeostasis in response to elevated temperatures. Regulates CEK1 activation by phosphorylation in response to elevated temperatures. The sequence is that of Small heat shock protein 21 (HSP21) from Candida albicans (strain SC5314 / ATCC MYA-2876) (Yeast).